The primary structure comprises 284 residues: Acetylglutamate kinase (284 aa).

Substrate is bound by residues 64-65, R86, and N181; that span reads GG.

This sequence belongs to the acetylglutamate kinase family. ArgB subfamily.

The protein localises to the cytoplasm. The enzyme catalyses N-acetyl-L-glutamate + ATP = N-acetyl-L-glutamyl 5-phosphate + ADP. It participates in amino-acid biosynthesis; L-arginine biosynthesis; N(2)-acetyl-L-ornithine from L-glutamate: step 2/4. In terms of biological role, catalyzes the ATP-dependent phosphorylation of N-acetyl-L-glutamate. The chain is Acetylglutamate kinase from Wolinella succinogenes (strain ATCC 29543 / DSM 1740 / CCUG 13145 / JCM 31913 / LMG 7466 / NCTC 11488 / FDC 602W) (Vibrio succinogenes).